We begin with the raw amino-acid sequence, 168 residues long: Zinc-finger homeodomain protein 14 (168 aa).

A ZF-HD dimerization-type; degenerate zinc finger spans residues 7–51 (YRECMRNHAAKLGSYAIDGCREYSQPSTGDLCVACGCHRSYHRRI). Residues 76-103 (ARLKWKTAEERNEEEEDDTEETSTEEKM) are a coiled coil. The disordered stretch occupies residues 82-112 (TAEERNEEEEDDTEETSTEEKMTVQRRRKSK). The span at 86-98 (RNEEEEDDTEETS) shows a compositional bias: acidic residues. Residues 106–168 (QRRRKSKFTA…WVNNNKKFYH (63 aa)) constitute a DNA-binding region (homeobox).

Homo- and heterodimer with other ZFHD proteins. Interacts with ZHD11. In terms of tissue distribution, mostly expressed in flowers and stems.

Its subcellular location is the nucleus. Putative transcription factor. This Arabidopsis thaliana (Mouse-ear cress) protein is Zinc-finger homeodomain protein 14 (ZHD14).